Here is a 632-residue protein sequence, read N- to C-terminus: Eukaryotic peptide chain release factor GTP-binding subunit ERF3B (632 aa).

Disordered regions lie at residues methionine 1 to isoleucine 31 and serine 162 to serine 200. Basic and acidic residues predominate over residues glutamate 178–lysine 192. A tr-type G domain is found at lysine 205 to arginine 429. The segment at glycine 214 to serine 221 is G1. Aspartate 217–threonine 222 provides a ligand contact to GTP. Residues glycine 270 to glutamate 274 are G2. The interval aspartate 291–glycine 294 is G3. GTP is bound by residues asparagine 353–aspartate 356 and serine 395–leucine 397. Residues asparagine 353–aspartate 356 form a G4 region. A G5 region spans residues serine 395–leucine 397.

The protein belongs to the TRAFAC class translation factor GTPase superfamily. Classic translation factor GTPase family. ERF3 subfamily. Component of the eRF1-eRF3-GTP ternary complex, composed of ETF1/ERF1 and ERF3 (GSPT1/ERF3A or GSPT2/ERF3B) and GTP. Component of the transient SURF (SMG1-UPF1-eRF1-eRF3) complex. Interacts with UPF1 and PABPC1. As to expression, highly expressed in brain. Moderately expressed in spleen and lung. Weakly expressed in heart, liver and kidney. Expression during the cell-cycle progression is constant.

The protein resides in the cytoplasm. It catalyses the reaction GTP + H2O = GDP + phosphate + H(+). Functionally, GTPase component of the eRF1-eRF3-GTP ternary complex, a ternary complex that mediates translation termination in response to the termination codons UAA, UAG and UGA. GSPT2/ERF3B mediates ETF1/ERF1 delivery to stop codons: The eRF1-eRF3-GTP complex binds to a stop codon in the ribosomal A-site. GTP hydrolysis by GSPT2/ERF3B induces a conformational change that leads to its dissociation, permitting ETF1/ERF1 to accommodate fully in the A-site. Component of the transient SURF complex which recruits UPF1 to stalled ribosomes in the context of nonsense-mediated decay (NMD) of mRNAs containing premature stop codons. In Mus musculus (Mouse), this protein is Eukaryotic peptide chain release factor GTP-binding subunit ERF3B (Gspt2).